A 432-amino-acid chain; its full sequence is Adenylosuccinate synthetase (432 aa).

GTP-binding positions include glycine 13 to lysine 19 and glycine 41 to threonine 43. Catalysis depends on aspartate 14, which acts as the Proton acceptor. Mg(2+) contacts are provided by aspartate 14 and glycine 41. Residues aspartate 14–lysine 17, asparagine 39–histidine 42, threonine 130, arginine 144, glutamine 225, threonine 240, and arginine 304 contribute to the IMP site. Histidine 42 (proton donor) is an active-site residue. Alanine 300–arginine 306 serves as a coordination point for substrate. Residues arginine 306, lysine 332–aspartate 334, and serine 415–glycine 417 contribute to the GTP site.

This sequence belongs to the adenylosuccinate synthetase family. Homodimer. The cofactor is Mg(2+).

It is found in the cytoplasm. It carries out the reaction IMP + L-aspartate + GTP = N(6)-(1,2-dicarboxyethyl)-AMP + GDP + phosphate + 2 H(+). The protein operates within purine metabolism; AMP biosynthesis via de novo pathway; AMP from IMP: step 1/2. Functionally, plays an important role in the de novo pathway of purine nucleotide biosynthesis. Catalyzes the first committed step in the biosynthesis of AMP from IMP. The protein is Adenylosuccinate synthetase of Salmonella typhi.